A 590-amino-acid chain; its full sequence is Leishmanolysin (590 aa).

The N-terminal stretch at 1 to 39 (MSVDSSSTHRHRSVAARLVRLAAAGAAVIAAVGTAAAWA) is a signal peptide. Positions 40-87 (HAGAVQHRCIHDAMQARVRQSVARHHTAPGAVSAVGLSYVTLGAAPTV) are cleaved as a propeptide — activation peptide. Cystine bridges form between Cys-112–Cys-129 and Cys-178–Cys-217. Residue His-251 participates in Zn(2+) binding. Residue Glu-252 is part of the active site. His-255 contacts Zn(2+). Residue Asn-287 is glycosylated (N-linked (GlcNAc...) asparagine). Disulfide bonds link Cys-301–Cys-373, Cys-380–Cys-443, Cys-393–Cys-412, Cys-402–Cys-477, Cys-454–Cys-498, Cys-503–Cys-553, and Cys-523–Cys-546. A Zn(2+)-binding site is contributed by His-321. A lipid anchor (GPI-anchor amidated asparagine) is attached at Asn-565. Positions 566 to 590 (AAAGRRGPRAAATALLVAALLAVAL) are cleaved as a propeptide — removed in mature form.

Belongs to the peptidase M8 family. The cofactor is Zn(2+).

The protein localises to the cell membrane. It catalyses the reaction Preference for hydrophobic residues at P1 and P1' and basic residues at P2' and P3'. A model nonapeptide is cleaved at -Ala-Tyr-|-Leu-Lys-Lys-.. Its function is as follows. Has an integral role during the infection of macrophages in the mammalian host. The sequence is that of Leishmanolysin (gp63) from Leishmania donovani.